The primary structure comprises 327 residues: Phenylalanine--tRNA ligase alpha subunit (327 aa).

Residue Glu-252 coordinates Mg(2+).

It belongs to the class-II aminoacyl-tRNA synthetase family. Phe-tRNA synthetase alpha subunit type 1 subfamily. As to quaternary structure, tetramer of two alpha and two beta subunits. The cofactor is Mg(2+).

Its subcellular location is the cytoplasm. The catalysed reaction is tRNA(Phe) + L-phenylalanine + ATP = L-phenylalanyl-tRNA(Phe) + AMP + diphosphate + H(+). This chain is Phenylalanine--tRNA ligase alpha subunit, found in Shewanella oneidensis (strain ATCC 700550 / JCM 31522 / CIP 106686 / LMG 19005 / NCIMB 14063 / MR-1).